The chain runs to 109 residues: Staphostatin B (109 aa).

The segment at 97 to 101 is binds to staphopain B; that stretch reads IGTSR.

Belongs to the protease inhibitor I57 (SspC) family. As to quaternary structure, forms a stable non-covalent complex with prematurely activated/folded SspB.

Its subcellular location is the cytoplasm. Functionally, specifically inhibits the cysteine protease staphopain B (SspB) by blocking the active site of the enzyme. Probably required to protect cytoplasmic proteins from being degraded by prematurely activated/folded prostaphopain B. Also involved in growth capacity, viability and bacterial morphology. The protein is Staphostatin B (sspC) of Staphylococcus aureus (strain NCTC 8325 / PS 47).